Reading from the N-terminus, the 482-residue chain is BTB/POZ domain and ankyrin repeat-containing protein NOOT1 (482 aa).

Residues 25–107 form the BTB domain; it reads SDVVFSVEGR…LYSGQVSIVP (83 aa). The C2HC NPR-type zinc finger occupies 113 to 127; that stretch reads RPNCGDRGCWHTHCT. Zn(2+) is bound by residues Cys-116, Cys-121, His-123, and Cys-126. ANK repeat units follow at residues 249–278, 279–308, 313–342, and 346–380; these read QKIR…LNLD, EALA…DVNF, TGKT…DPNV, and DGVT…KLRL. Residues 395–434 are disordered; it reads EEGNNNNSNNNNNATASSATNMYPHHNMNEDHHHSHNNNN. Low complexity predominate over residues 398-415; that stretch reads NNNNSNNNNNATASSATN.

It belongs to the plant 'ANKYRIN-BTB/POZ' family. 'NOOT-BOP-COCH-like' (NBCL) subfamily. As to quaternary structure, homodimer. Expressed in the shoot apical meristem (SAM) at the base of the developing leaf where stipules are formed. Associated with functional and vestigial abscission zones (AZs), including pulvini.

The protein localises to the nucleus. Its subcellular location is the cytoplasm. It is found in the cell membrane. Its pathway is protein modification; protein ubiquitination. May act as a substrate-specific adapter of an E3 ubiquitin-protein ligase complex (CUL3-RBX1-BTB) which mediates the ubiquitination and subsequent proteasomal degradation of target proteins. Transcriptional co-regulator involved in the promotion of leaf and floral meristem fate and determinacy. Promotes normal stipule growth and development. Required for the abscission of senescent organs, probably by regulating the cell wall disorganization in abscission zones (AZs, e.g. pulvini at the base of leaves). Involved in the coordination of the symbiotic nodule developmental program. Promotes the formation of root nodules by interacting directly with APP1 to modulate the expression of the nuclear transcription factor Y subunit (NF-YA1), a key nodulin. Necessary for the robust maintenance of nodule identity throughout the nodule developmental program. Involved in the regulation of indeterminate nodule identity in association with NOOT2. This Medicago truncatula (Barrel medic) protein is BTB/POZ domain and ankyrin repeat-containing protein NOOT1.